The following is a 587-amino-acid chain: Estrogen receptor (587 aa).

Positions 1-176 (MTLHTKTSGV…SMESTKETRY (176 aa)) are modulating (transactivation AF-1). NR C4-type zinc fingers lie at residues 177–197 (CAVC…CEGC) and 213–237 (CPAT…LRKC). The segment at residues 177-242 (CAVCNDYASG…RLRKCYEVGM (66 aa)) is a DNA-binding region (nuclear receptor). Positions 243-302 (MKGGIRKDRRGGRVMKQKRQREEQDSRNGEASSTELRAPTLWASPLVVKHNKKNSPALSL) are hinge. Positions 248–277 (RKDRRGGRVMKQKRQREEQDSRNGEASSTE) are disordered. Positions 249–261 (KDRRGGRVMKQKR) are enriched in basic residues. An NR LBD domain is found at 303-539 (TAEQMVSALL…DLLLEMLDAH (237 aa)). Residues 303 to 587 (TAEQMVSALL…KEEENMQNTL (285 aa)) are transactivation AF-2.

The protein belongs to the nuclear hormone receptor family. NR3 subfamily. In terms of assembly, binds DNA as a homodimer. Can form a heterodimer with ER-beta.

It localises to the nucleus. Functionally, the steroid hormones and their receptors are involved in the regulation of eukaryotic gene expression and affect cellular proliferation and differentiation in target tissues. This is Estrogen receptor (ESR1) from Taeniopygia guttata (Zebra finch).